The primary structure comprises 308 residues: Ribosomal protein L11 methyltransferase (308 aa).

S-adenosyl-L-methionine-binding residues include Thr160, Gly181, Asp203, and Asn245.

This sequence belongs to the methyltransferase superfamily. PrmA family.

It localises to the cytoplasm. The catalysed reaction is L-lysyl-[protein] + 3 S-adenosyl-L-methionine = N(6),N(6),N(6)-trimethyl-L-lysyl-[protein] + 3 S-adenosyl-L-homocysteine + 3 H(+). Methylates ribosomal protein L11. This is Ribosomal protein L11 methyltransferase from Thermoanaerobacter sp. (strain X514).